The primary structure comprises 347 residues: Heme A synthase (347 aa).

8 consecutive transmembrane segments (helical) span residues 14-34, 96-116, 129-149, 162-182, 199-219, 260-280, 287-307, and 311-331; these read VKIWLCICCIGILVMVFIGGI, FHRLLGRIVGLVFLIPFLYFM, FILIAFLILVQGVMGWYMVKS, LAMHLLLALAIFYLLWKHFLL, VFYIIISLITIQITCGALVAG, FIHEVIALLILIIVVITLLVL, MYLLLALLLIQLTLGILTFIY, and IILASLHQVTAFILFASSIYL. His262 contacts heme. His317 is a heme binding site.

This sequence belongs to the COX15/CtaA family. Type 2 subfamily. Interacts with CtaB. Requires heme b as cofactor.

Its subcellular location is the cell membrane. It carries out the reaction Fe(II)-heme o + 2 A + H2O = Fe(II)-heme a + 2 AH2. Its pathway is porphyrin-containing compound metabolism; heme A biosynthesis; heme A from heme O: step 1/1. Catalyzes the conversion of heme O to heme A by two successive hydroxylations of the methyl group at C8. The first hydroxylation forms heme I, the second hydroxylation results in an unstable dihydroxymethyl group, which spontaneously dehydrates, resulting in the formyl group of heme A. This is Heme A synthase from Ehrlichia ruminantium (strain Welgevonden).